We begin with the raw amino-acid sequence, 85 residues long: MADIKALITTVVTPLVQYPDDIKVDFKETTRYLEYNLTVNPEDIGRVIGRQGRVASAIRTIVYSVRVSGPKRVRLTIEDGQQKNS.

The KH domain occupies 32 to 85 (YLEYNLTVNPEDIGRVIGRQGRVASAIRTIVYSVRVSGPKRVRLTIEDGQQKNS).

The protein belongs to the KhpA RNA-binding protein family. Forms a complex with KhpB.

It localises to the cytoplasm. Functionally, a probable RNA chaperone. Forms a complex with KhpB which binds to cellular RNA and controls its expression. Plays a role in peptidoglycan (PG) homeostasis and cell length regulation. Necessary for correct cell elongation. The polypeptide is RNA-binding protein KhpA (Lactiplantibacillus plantarum (strain ATCC BAA-793 / NCIMB 8826 / WCFS1) (Lactobacillus plantarum)).